The following is a 241-amino-acid chain: Uridylate kinase (241 aa).

12–15 is an ATP binding site; sequence KVSG. Positions 20 to 25 are involved in allosteric activation by GTP; it reads GEKGTG. Residue glycine 54 participates in UMP binding. Positions 55 and 59 each coordinate ATP. Residues aspartate 74 and 135–142 contribute to the UMP site; that span reads TGNPYFST. The ATP site is built by asparagine 163, tyrosine 169, and aspartate 172.

The protein belongs to the UMP kinase family. As to quaternary structure, homohexamer.

It is found in the cytoplasm. The enzyme catalyses UMP + ATP = UDP + ADP. Its pathway is pyrimidine metabolism; CTP biosynthesis via de novo pathway; UDP from UMP (UMPK route): step 1/1. Its activity is regulated as follows. Allosterically activated by GTP. Inhibited by UTP. Functionally, catalyzes the reversible phosphorylation of UMP to UDP. The chain is Uridylate kinase from Lactobacillus johnsonii (strain CNCM I-12250 / La1 / NCC 533).